Reading from the N-terminus, the 264-residue chain is 3-methyl-2-oxobutanoate hydroxymethyltransferase (264 aa).

2 residues coordinate Mg(2+): Asp-45 and Asp-84. Residues 45-46 (DS), Asp-84, and Lys-112 each bind 3-methyl-2-oxobutanoate. Residue Glu-114 participates in Mg(2+) binding. The active-site Proton acceptor is the Glu-181.

The protein belongs to the PanB family. Homodecamer; pentamer of dimers. Mg(2+) serves as cofactor.

Its subcellular location is the cytoplasm. The enzyme catalyses 3-methyl-2-oxobutanoate + (6R)-5,10-methylene-5,6,7,8-tetrahydrofolate + H2O = 2-dehydropantoate + (6S)-5,6,7,8-tetrahydrofolate. It participates in cofactor biosynthesis; (R)-pantothenate biosynthesis; (R)-pantoate from 3-methyl-2-oxobutanoate: step 1/2. Functionally, catalyzes the reversible reaction in which hydroxymethyl group from 5,10-methylenetetrahydrofolate is transferred onto alpha-ketoisovalerate to form ketopantoate. The sequence is that of 3-methyl-2-oxobutanoate hydroxymethyltransferase from Aliivibrio fischeri (strain MJ11) (Vibrio fischeri).